Consider the following 410-residue polypeptide: Serine hydroxymethyltransferase (410 aa).

Residues Leu119 and 123–125 (GHL) contribute to the (6S)-5,6,7,8-tetrahydrofolate site. Lys228 carries the post-translational modification N6-(pyridoxal phosphate)lysine. 351-353 (SPF) serves as a coordination point for (6S)-5,6,7,8-tetrahydrofolate.

Belongs to the SHMT family. As to quaternary structure, homodimer. It depends on pyridoxal 5'-phosphate as a cofactor.

The protein localises to the cytoplasm. It carries out the reaction (6R)-5,10-methylene-5,6,7,8-tetrahydrofolate + glycine + H2O = (6S)-5,6,7,8-tetrahydrofolate + L-serine. The protein operates within one-carbon metabolism; tetrahydrofolate interconversion. It participates in amino-acid biosynthesis; glycine biosynthesis; glycine from L-serine: step 1/1. In terms of biological role, catalyzes the reversible interconversion of serine and glycine with tetrahydrofolate (THF) serving as the one-carbon carrier. This reaction serves as the major source of one-carbon groups required for the biosynthesis of purines, thymidylate, methionine, and other important biomolecules. Also exhibits THF-independent aldolase activity toward beta-hydroxyamino acids, producing glycine and aldehydes, via a retro-aldol mechanism. This is Serine hydroxymethyltransferase from Alkaliphilus metalliredigens (strain QYMF).